We begin with the raw amino-acid sequence, 367 residues long: Cystinosin (367 aa).

Residues 1 to 22 form the signal peptide; the sequence is MRRNWLLILTLFLLMFIEKYES. Residues 23–125 are Lumenal-facing; that stretch reads TVSLTAPPTV…LVIHSRIVSI (103 aa). 6 N-linked (GlcNAc...) asparagine glycosylation sites follow: Asn-36, Asn-51, Asn-66, Asn-84, Asn-104, and Asn-107. Residues 123–189 form the PQ-loop 1 domain; sequence VSIINQVIGW…LLWVPYIQEE (67 aa). The chain crosses the membrane as a helical span at residues 126 to 150; that stretch reads INQVIGWIYFMAWSVSFYPQVIQNW. Topologically, residues 151-159 are cytoplasmic; it reads RRKSVIGLS. Residues 160 to 179 traverse the membrane as a helical segment; the sequence is FDFLALNLTGFVAYSVFNIG. Asn-166 contributes to the L-cystine binding site. Topologically, residues 180–202 are lumenal; sequence LLWVPYIQEEFLLKYPNGVNPVD. A helical transmembrane segment spans residues 203 to 225; it reads SNDAFFSLHAVALTLIVILQCCL. Asp-205 contributes to the H(+) binding site. The Cytoplasmic portion of the chain corresponds to 226 to 234; it reads YERGNQRVS. Residues 235-257 traverse the membrane as a helical segment; sequence WPSIGFLVLAWLFVLVTMIVAAV. Residues 258–263 are Lumenal-facing; the sequence is GITTWL. The 66-residue stretch at 263–328 folds into the PQ-loop 2 domain; it reads LQFLFCFSYI…QSYNNDQWTL (66 aa). The helical transmembrane segment at 264 to 289 threads the bilayer; that stretch reads QFLFCFSYIKLIITLIKYFPQAYMNF. 3 residues coordinate L-cystine: Lys-273, Lys-280, and Tyr-281. Residues 290-298 lie on the Cytoplasmic side of the membrane; the sequence is YYKSTKGWS. The helical transmembrane segment at 299-308 threads the bilayer; the sequence is IGGVLLDFTG. Asp-305 provides a ligand contact to L-cystine. Asp-305 is a binding site for H(+). Residues 309–331 are Lumenal-facing; that stretch reads GSFSLLQMFLQSYNNDQWTLIFG. The chain crosses the membrane as a helical span at residues 332 to 354; sequence DPTKFGLGVFTIFFDVVFFIQHF. Residue Asp-346 participates in H(+) binding. The Cytoplasmic portion of the chain corresponds to 355–367; the sequence is YLYRKKPGYDQLN. Positions 362–366 match the Lysosomal targeting motif motif; that stretch reads GYDQL.

It belongs to the cystinosin family. In terms of assembly, interacts with components of the V-ATPase complex. Interacts with components of the Ragulator complex. Interacts with RRAGA/RagA and RRAGC/RagC. Interacts with AP-3 complex subunit mu (AP3M1 or AP3M2).

It localises to the lysosome membrane. The protein resides in the melanosome membrane. It catalyses the reaction L-cystine(out) + H(+)(out) = L-cystine(in) + H(+)(in). Switches between a lumen- and a cytosol-open conformation: pH induces conformational changes and shifts the equilibrium to facilitate the transition between the lumen- and cytosol-open conformation, thereby promoting cystine transport. Protonation of specific aspartate residues (Asp-205, Asp-305 and Asp-346) favors the cytosol-open conformation. Functionally, cystine/H(+) symporter that mediates export of cystine, the oxidized dimer of cysteine, from lysosomes. Plays an important role in melanin synthesis by catalyzing cystine export from melanosomes, possibly by inhibiting pheomelanin synthesis. In addition to cystine export, also acts as a positive regulator of mTORC1 signaling in kidney proximal tubular cells, via interactions with components of the v-ATPase and Ragulator complexes. Also involved in small GTPase-regulated vesicle trafficking and lysosomal localization of LAMP2A, independently of cystine transporter activity. The protein is Cystinosin of Mus musculus (Mouse).